Here is a 126-residue protein sequence, read N- to C-terminus: uncharacterized protein (126 aa).

This is an uncharacterized protein from Acanthamoeba polyphaga mimivirus (APMV).